The primary structure comprises 264 residues: S-adenosylmethionine decarboxylase proenzyme (264 aa).

Serine 113 serves as the catalytic Schiff-base intermediate with substrate; via pyruvic acid. Serine 113 bears the Pyruvic acid (Ser); by autocatalysis mark. Histidine 118 serves as the catalytic Proton acceptor; for processing activity. The Proton donor; for catalytic activity role is filled by cysteine 141.

The protein belongs to the prokaryotic AdoMetDC family. Type 2 subfamily. In terms of assembly, heterooctamer of four alpha and four beta chains arranged as a tetramer of alpha/beta heterodimers. Requires pyruvate as cofactor. Is synthesized initially as an inactive proenzyme. Formation of the active enzyme involves a self-maturation process in which the active site pyruvoyl group is generated from an internal serine residue via an autocatalytic post-translational modification. Two non-identical subunits are generated from the proenzyme in this reaction, and the pyruvate is formed at the N-terminus of the alpha chain, which is derived from the carboxyl end of the proenzyme. The post-translation cleavage follows an unusual pathway, termed non-hydrolytic serinolysis, in which the side chain hydroxyl group of the serine supplies its oxygen atom to form the C-terminus of the beta chain, while the remainder of the serine residue undergoes an oxidative deamination to produce ammonia and the pyruvoyl group blocking the N-terminus of the alpha chain.

It catalyses the reaction S-adenosyl-L-methionine + H(+) = S-adenosyl 3-(methylsulfanyl)propylamine + CO2. The protein operates within amine and polyamine biosynthesis; S-adenosylmethioninamine biosynthesis; S-adenosylmethioninamine from S-adenosyl-L-methionine: step 1/1. Functionally, catalyzes the decarboxylation of S-adenosylmethionine to S-adenosylmethioninamine (dcAdoMet), the propylamine donor required for the synthesis of the polyamines spermine and spermidine from the diamine putrescine. The polypeptide is S-adenosylmethionine decarboxylase proenzyme (Stenotrophomonas maltophilia (strain K279a)).